Reading from the N-terminus, the 1199-residue chain is Major DNA-binding protein (1199 aa).

Residues 289 to 314 (SGTTTARGARRNDVNSTSKPSPSGGF) are disordered. The segment at 497–510 (CSLCEKHTRPVCAH) is a zinc-finger region. Short sequence motifs (required for filament formation) lie at residues 841–842 (FW) and 1146–1148 (FNF). A required for nuclear localization region spans residues 1172–1199 (LKRPPEDDELFDLSGIPIKHGNITMEMI).

It belongs to the herpesviridae major DNA-binding protein family. Homooligomers. Forms double-helical filaments necessary for the formation of replication compartments within the host nucleus. Interacts with the origin-binding protein. Interacts with the helicase primase complex; this interaction stimulates primer synthesis activity of the helicase-primase complex. Interacts with the DNA polymerase. Interacts with the alkaline exonuclease; this interaction increases its nuclease processivity.

Its subcellular location is the host nucleus. Plays several crucial roles in viral infection. Participates in the opening of the viral DNA origin to initiate replication by interacting with the origin-binding protein. May disrupt loops, hairpins and other secondary structures present on ssDNA to reduce and eliminate pausing of viral DNA polymerase at specific sites during elongation. Promotes viral DNA recombination by performing strand-transfer, characterized by the ability to transfer a DNA strand from a linear duplex to a complementary single-stranded DNA circle. Can also catalyze the renaturation of complementary single strands. Additionally, reorganizes the host cell nucleus, leading to the formation of prereplicative sites and replication compartments. This process is driven by the protein which can form double-helical filaments in the absence of DNA. This chain is Major DNA-binding protein, found in Varicella-zoster virus (strain Oka vaccine) (HHV-3).